The primary structure comprises 1298 residues: Phosphoribosylformylglycinamidine synthase (1298 aa).

Residues 298-328 (TAIAPFPGASTGSGGEIRDEGATGRGAKPKA) are disordered. Residues 305–316 (GASTGSGGEIRD), 384–386 (TGY), and Ala676 each bind ATP. Residues Asp677, Glu716, Asn720, and Asp884 each contribute to the Mg(2+) site. ATP is bound at residue Ser886. One can recognise a Glutamine amidotransferase type-1 domain in the interval 1045–1298 (VAILREQGVN…MFRNARVWVD (254 aa)). Residue Cys1138 is the Nucleophile of the active site. Residues His1263 and Glu1265 contribute to the active site.

It in the N-terminal section; belongs to the FGAMS family. In terms of assembly, monomer.

It localises to the cytoplasm. It catalyses the reaction N(2)-formyl-N(1)-(5-phospho-beta-D-ribosyl)glycinamide + L-glutamine + ATP + H2O = 2-formamido-N(1)-(5-O-phospho-beta-D-ribosyl)acetamidine + L-glutamate + ADP + phosphate + H(+). It participates in purine metabolism; IMP biosynthesis via de novo pathway; 5-amino-1-(5-phospho-D-ribosyl)imidazole from N(2)-formyl-N(1)-(5-phospho-D-ribosyl)glycinamide: step 1/2. Phosphoribosylformylglycinamidine synthase involved in the purines biosynthetic pathway. Catalyzes the ATP-dependent conversion of formylglycinamide ribonucleotide (FGAR) and glutamine to yield formylglycinamidine ribonucleotide (FGAM) and glutamate. The chain is Phosphoribosylformylglycinamidine synthase from Pseudomonas aeruginosa (strain ATCC 15692 / DSM 22644 / CIP 104116 / JCM 14847 / LMG 12228 / 1C / PRS 101 / PAO1).